A 77-amino-acid polypeptide reads, in one-letter code: Acyl carrier protein (77 aa).

One can recognise a Carrier domain in the interval Ser-2–Thr-77. Position 37 is an O-(pantetheine 4'-phosphoryl)serine (Ser-37).

The protein belongs to the acyl carrier protein (ACP) family. Post-translationally, 4'-phosphopantetheine is transferred from CoA to a specific serine of apo-ACP by AcpS. This modification is essential for activity because fatty acids are bound in thioester linkage to the sulfhydryl of the prosthetic group.

It is found in the cytoplasm. It functions in the pathway lipid metabolism; fatty acid biosynthesis. In terms of biological role, carrier of the growing fatty acid chain in fatty acid biosynthesis. The polypeptide is Acyl carrier protein (Geobacter sulfurreducens (strain ATCC 51573 / DSM 12127 / PCA)).